Here is a 427-residue protein sequence, read N- to C-terminus: MAATDIARQVGEGCRTVPLAGHVGFDSLPDQLVNKSVSQGFCFNILCVGETGLGKSTLMDTLFNTKFEGEPATHTQPGVQLRSNTYDLQESNVGLKLTIVSTVGFGDQINKEDSYKPIVEFIDAQFEAYLQEELKIRRVLHTYHDSRIHACLYFIAPTGHSLKSLDLVTMKKLDSKVNIIPIIAKSDAISKSELTKFKIKITSELVNNGVQIYQFPTDDESVAEINGTMNAHLPFAVIGSTEELKIGNKMMKARQYPWGTVQVENEAHCDFVKLREMLIRVNMEDLREQTHSRHYELYRRCKLEEMGFKDTDPDSKPFSLQETYEAKRNEFLGELQKKEEEMRQMFVQRVKEKEAELKEAEKELHEKFDRLKKLHQDEKKKLEDKKKSLDDEVNAFKQRKTAAELLQSQGSQAGGSQTLKRDKEKKN.

Position 2 is an N-acetylalanine (alanine 2). Serine 27 is modified (phosphoserine). A Septin-type G domain is found at 39–305; sequence QGFCFNILCV…ELYRRCKLEE (267 aa). The tract at residues 49–56 is G1 motif; the sequence is GETGLGKS. Residues 49–56, glycine 104, 185–193, glycine 239, and arginine 254 contribute to the GTP site; these read GETGLGKS and KSDAISKSE. Positions 101–104 are G3 motif; the sequence is STVG. The interval 184–187 is G4 motif; that stretch reads AKSD. The stretch at 321–416 forms a coiled coil; that stretch reads QETYEAKRNE…QSQGSQAGGS (96 aa). Lysine 367 bears the N6-acetyllysine mark. The tract at residues 405–427 is disordered; that stretch reads LLQSQGSQAGGSQTLKRDKEKKN. The span at 407–417 shows a compositional bias: low complexity; it reads QSQGSQAGGSQ. Serine 416 is subject to Phosphoserine. Phosphothreonine is present on threonine 418.

Belongs to the TRAFAC class TrmE-Era-EngA-EngB-Septin-like GTPase superfamily. Septin GTPase family. In terms of assembly, septins polymerize into heterooligomeric protein complexes that form filaments, and associate with cellular membranes, actin filaments and microtubules. GTPase activity is required for filament formation. Filaments are assembled from asymmetrical heterotrimers, composed of SEPTIN2, SEPTIN6 and SEPTIN7 that associate head-to-head to form a hexameric unit. Within the trimer, directly interacts with SEPTIN2 and SEPTIN7. Also interacts with SEPTIN9 and SEPTIN12. Interaction with SEPTIN12 alters filament structure. Component of a septin core octameric complex consisting of SEPTIN12, SEPTIN7, SEPTIN6 and SEPTIN2 or SEPTIN4 in the order 12-7-6-2-2-6-7-12 or 12-7-6-4-4-6-7-12 and located in the sperm annulus. Interacts with SOCS7. Interacts with HNRNPA1.

The protein resides in the cytoplasm. The protein localises to the cytoskeleton. It is found in the spindle. Its subcellular location is the chromosome. It localises to the centromere. The protein resides in the kinetochore. The protein localises to the cleavage furrow. It is found in the midbody. Its subcellular location is the cell projection. It localises to the cilium. The protein resides in the flagellum. In terms of biological role, filament-forming cytoskeletal GTPase. Required for normal organization of the actin cytoskeleton. Involved in cytokinesis. Forms a filamentous structure with SEPTIN12, SEPTIN6, SEPTIN2 and probably SEPTIN4 at the sperm annulus which is required for the structural integrity and motility of the sperm tail during postmeiotic differentiation. This chain is Septin-6, found in Bos taurus (Bovine).